Here is an 85-residue protein sequence, read N- to C-terminus: Large ribosomal subunit protein bL27 (85 aa).

Residues 1–21 are disordered; it reads MAHKKGGGSTHNGRDSKPKML.

This sequence belongs to the bacterial ribosomal protein bL27 family.

The sequence is that of Large ribosomal subunit protein bL27 from Albidiferax ferrireducens (strain ATCC BAA-621 / DSM 15236 / T118) (Rhodoferax ferrireducens).